The chain runs to 372 residues: Glutamate 5-kinase (372 aa).

Lys-14 serves as a coordination point for ATP. Ser-54, Asp-141, and Asn-153 together coordinate substrate. 173-174 (TD) contributes to the ATP binding site. A PUA domain is found at 280–358 (RGTLVLDDGA…DAIEALLGYV (79 aa)).

It belongs to the glutamate 5-kinase family.

It is found in the cytoplasm. It catalyses the reaction L-glutamate + ATP = L-glutamyl 5-phosphate + ADP. It functions in the pathway amino-acid biosynthesis; L-proline biosynthesis; L-glutamate 5-semialdehyde from L-glutamate: step 1/2. Functionally, catalyzes the transfer of a phosphate group to glutamate to form L-glutamate 5-phosphate. This Pseudomonas paraeruginosa (strain DSM 24068 / PA7) (Pseudomonas aeruginosa (strain PA7)) protein is Glutamate 5-kinase.